The following is a 242-amino-acid chain: Probable transcriptional regulatory protein PXO_01555 (242 aa).

Belongs to the TACO1 family.

It is found in the cytoplasm. This chain is Probable transcriptional regulatory protein PXO_01555, found in Xanthomonas oryzae pv. oryzae (strain PXO99A).